A 526-amino-acid chain; its full sequence is MDCHTKETLGVTQWRRSTMLTLSLLYAITPADGAKEALEYKTWTNHCGLAATLRKVAGGVLTKLKSHISYRKKLEEMETKLRIYALKGDGVGEQKSAEILATTAALMRQKALTPEEANLKTALKAAGFAGEGAAAVSSYLMTLGTLTTSGSAHCLSNEGGDGDGKDQLAPKGCRHGTEADFDAGAGPAESEVADSGFAQVPGKQDGANAGQANMCALFTHQATPHSSQGIYITGAQTKPSFGYGMLTIGTTDQTIGLKLSDIKGKQADSAQKFWSSCHAAVKAAQDMKADPALKVDQTLLAVLVASPEMAEILKLEAAASQQKGPEEVTIDLATEKNNYFGTNNNKLEPLWTKIKGQNIVDLAATKGSTKELGTVTDTAELQKLLSYYYTVNKEEQKKTAEKITKLETELADQKGKSPESECNKISEEPKCNEDKICSWHKEVKAGEKHCKFNSTKAKEKGVSVTQTQTAGGTEATTDKCKGKLEDTCKKESNCKWENNACKDSSILVTKKFALTVVSAAFVALLF.

The signal sequence occupies residues 1–33 (MDCHTKETLGVTQWRRSTMLTLSLLYAITPADG). Cystine bridges form between Cys-47-Cys-173 and Cys-154-Cys-215. The segment at 157 to 193 (NEGGDGDGKDQLAPKGCRHGTEADFDAGAGPAESEVA) is disordered. N-linked (GlcNAc...) asparagine glycosylation occurs at Asn-453. A lipid anchor (GPI-anchor amidated aspartate) is attached at Asp-503. Residues 504 to 526 (SSILVTKKFALTVVSAAFVALLF) constitute a propeptide, removed in mature form.

It localises to the cell membrane. In terms of biological role, VSG forms a coat on the surface of the parasite. The trypanosome evades the immune response of the host by expressing a series of antigenically distinct VSGs from an estimated 1000 VSG genes. The polypeptide is Variant surface glycoprotein MITAT 1.4A (Trypanosoma brucei brucei).